The primary structure comprises 867 residues: Leucine--tRNA ligase (867 aa).

The 'HIGH' region motif lies at 42–52; sequence PYPSGNLHMGH. The 'KMSKS' region signature appears at 625 to 629; sequence KMSKS. Residue K628 participates in ATP binding.

The protein belongs to the class-I aminoacyl-tRNA synthetase family.

The protein resides in the cytoplasm. It catalyses the reaction tRNA(Leu) + L-leucine + ATP = L-leucyl-tRNA(Leu) + AMP + diphosphate. The polypeptide is Leucine--tRNA ligase (Blochmanniella floridana).